The following is a 172-amino-acid chain: GTP-dependent dephospho-CoA kinase (172 aa).

D40, V41, V42, D59, and E112 together coordinate GTP.

The protein belongs to the GTP-dependent DPCK family.

The enzyme catalyses 3'-dephospho-CoA + GTP = GDP + CoA + H(+). It functions in the pathway cofactor biosynthesis; coenzyme A biosynthesis. Catalyzes the GTP-dependent phosphorylation of the 3'-hydroxyl group of dephosphocoenzyme A to form coenzyme A (CoA). This chain is GTP-dependent dephospho-CoA kinase, found in Methanospirillum hungatei JF-1 (strain ATCC 27890 / DSM 864 / NBRC 100397 / JF-1).